Reading from the N-terminus, the 282-residue chain is ATP synthase subunit a (282 aa).

6 helical membrane passes run 38-58 (VDSMFYSVLLGLLTVFLLWLA), 97-117 (FVAPLALTVFVWIFLMNAMDM), 145-165 (VVPTADLSATLGMSCGVLLLC), 187-207 (FGSHPLLYPINFAMQIIEFVA), 225-247 (LIFILIALLGSTATVFGFVGHIV), and 261-281 (TLQAFIFMMLTLVYIGQAHEG).

The protein belongs to the ATPase A chain family. In terms of assembly, F-type ATPases have 2 components, CF(1) - the catalytic core - and CF(0) - the membrane proton channel. CF(1) has five subunits: alpha(3), beta(3), gamma(1), delta(1), epsilon(1). CF(0) has three main subunits: a(1), b(2) and c(9-12). The alpha and beta chains form an alternating ring which encloses part of the gamma chain. CF(1) is attached to CF(0) by a central stalk formed by the gamma and epsilon chains, while a peripheral stalk is formed by the delta and b chains.

The protein resides in the cell inner membrane. Key component of the proton channel; it plays a direct role in the translocation of protons across the membrane. The sequence is that of ATP synthase subunit a from Azoarcus sp. (strain BH72).